Here is a 283-residue protein sequence, read N- to C-terminus: Nucleotide-binding protein IL0393 (283 aa).

Residue 8 to 15 (GRSGSGKT) coordinates ATP. Position 56–59 (56–59 (DVRN)) interacts with GTP.

Belongs to the RapZ-like family.

Functionally, displays ATPase and GTPase activities. This is Nucleotide-binding protein IL0393 from Idiomarina loihiensis (strain ATCC BAA-735 / DSM 15497 / L2-TR).